Reading from the N-terminus, the 396-residue chain is Metacaspase-1 (396 aa).

A compositionally biased stretch (gly residues) spans 1 to 20; the sequence is MSGYPGQGYQGQGYGQGYGQ. The disordered stretch occupies residues 1 to 86; it reads MSGYPGQGYQ…PQGMQQFGHG (86 aa). Residues 47–62 are compositionally biased toward low complexity; it reads HYQYGPPQGGYQYPPQ. Polar residues predominate over residues 72 to 81; that stretch reads QAHQPPQGMQ. Residues histidine 186 and cysteine 242 contribute to the active site.

Belongs to the peptidase C14B family.

Its function is as follows. Involved in cell death (apoptosis). The sequence is that of Metacaspase-1 (MCA1) from Pyricularia oryzae (strain 70-15 / ATCC MYA-4617 / FGSC 8958) (Rice blast fungus).